The chain runs to 311 residues: Heme A synthase (311 aa).

The Cytoplasmic portion of the chain corresponds to 1 to 6 (MQRFIK). A helical transmembrane segment spans residues 7–27 (WLAVITSLDLLIVLLGGALVT). Over 28–62 (KTGSGQGCGKSWPLCNGEFVPSNLSMETIIELSHR) the chain is Extracellular. An intrachain disulfide couples cysteine 35 to cysteine 42. Residue glutamate 58 is part of the active site. Histidine 61 contributes to the heme o binding site. Residues 63 to 83 (LTSGSAGILVTLLCILSWKYY) traverse the membrane as a helical segment. At 84–91 (KHVRETKT) the chain is on the cytoplasmic side. Residues 92–112 (LAILSFVFLVAQALMGAAAVV) traverse the membrane as a helical segment. Over 113–121 (WGQMPAVLA) the chain is Extracellular. The helical transmembrane segment at 122 to 142 (IHFGISLISFASVILLTCLIF) threads the bilayer. Histidine 123 provides a ligand contact to heme o. Residues 143–159 (EIDQKFDARSLIMDKKM) are Cytoplasmic-facing. The chain crosses the membrane as a helical span at residues 160 to 180 (KFHIYGVTIYCYLVVYTGALV). The Extracellular portion of the chain corresponds to 181–211 (RHERASLACPDFPLCSKNRPMPTQLHEWVQM). Cysteine 189 and cysteine 195 are joined by a disulfide. The chain crosses the membrane as a helical span at residues 212–232 (GHRLAAMLIFVWILYAMILAI). Histidine 213 serves as a coordination point for heme b. Over 233-243 (RHYKQQPVVYW) the chain is Cytoplasmic. Residues 244–264 (GWIISFILVTLQAIVGILVVF) form a helical membrane-spanning segment. Residues 265–271 (TNASLAM) are Extracellular-facing. Residues 272–292 (ALLHSLFISCLFAVLCYLVML) traverse the membrane as a helical segment. Histidine 275 serves as a coordination point for heme b. Over 293–311 (GTRSKVNAKEAASTSKQTK) the chain is Cytoplasmic.

Belongs to the COX15/CtaA family. Type 1 subfamily. As to quaternary structure, interacts with CtaB. Requires heme b as cofactor.

The protein localises to the cell membrane. It catalyses the reaction Fe(II)-heme o + 2 A + H2O = Fe(II)-heme a + 2 AH2. The protein operates within porphyrin-containing compound metabolism; heme A biosynthesis; heme A from heme O: step 1/1. Its function is as follows. Catalyzes the conversion of heme O to heme A by two successive hydroxylations of the methyl group at C8. The first hydroxylation forms heme I, the second hydroxylation results in an unstable dihydroxymethyl group, which spontaneously dehydrates, resulting in the formyl group of heme A. This Bacillus cereus (strain 03BB102) protein is Heme A synthase.